A 793-amino-acid polypeptide reads, in one-letter code: MAADWEEIRRLAADFQRAQFAETVQRLSERNCIEIVSKLVEDKKLDVVHTLDGKEYVTPAQISREIRDELYMHRGRINVVDLQKIINVDLVHVEGRANEIAKSDRGTQLILGQLIDEAYLDRLAEEVNDKLQEAGQVNIAELCKTYDLPGDFLTEALNARLGRVIQGQLDQYNRGMIFTQAFLSRHKACICGLFSGITRPTQINNLLNLYGFQENLVYSMLEELVNSARLKGSVVGGRQDKAIYIPDIYSKAQSTWVESFLKQNGYLEFESLTRLGIPDPINYIKKRFKSSRLLFLKTACVGRTIVDQLEASVEEAINSATWVDLQPMLPSILSEEDVGILLNEVLRSMNVQSSARLLSTSVVSEKFIAGCIALFEDLMQQKAQKEVKNNPVFLITEDDVKQSSALLETSASSKKDKRDERRKKAAEGGGSVKSGGGGNAREIRIRKTKKKGRKEEDSDEETTHSSQGRNKLGDVQFLSVEEIVEVLEEKVCDSSEEMLQELAEQLQRPLSKMYQEVVTTAFLSTSSSGAGGSRKKNMKDLQEEINNLYNNIRLFEKGTKLFSDETQATVAKHVLKTVCTDVTNVLLSFVAAEHMTSDSSAAMTSEIRLKILAKLSDEVRSPLMKLHNSLNGKAIEEFLSCLETSAEECGLFLKKGDKKRERQALSVHRQALCEQLRDAEDPALVLHLTSVLLFQNVTHCMLHAPGRCVPHIIGFLQSKIPEDQHKLLSQYQSLVVKQLVVQGHGAEKKTVPPEGAGGPADSDDTESLQRELHSLSRDIKDTVLAQRKPSVTE.

The tract at residues 2–212 (AADWEEIRRL…INNLLNLYGF (211 aa)) is required for E3 UFM1-protein ligase activity. 2 disordered regions span residues 405 to 472 (ALLE…RNKL) and 745 to 793 (GAEK…SVTE). Over residues 427–439 (EGGGSVKSGGGGN) the composition is skewed to gly residues. Residues 767–781 (SLQRELHSLSRDIKD) show a composition bias toward basic and acidic residues.

This sequence belongs to the UFL1 family. As to quaternary structure, catalytic component of the UFM1 ribosome E3 ligase (UREL) complex. Interacts with E2-like enzyme UFC1.

It localises to the endoplasmic reticulum membrane. It is found in the cytoplasm. The protein resides in the cytosol. The protein localises to the nucleus. Its subcellular location is the chromosome. E3 protein ligase that mediates ufmylation, the covalent attachment of the ubiquitin-like modifier UFM1 to lysine residues on target proteins, and which plays a key role in various processes, such as ribosome recycling, response to DNA damage, interferon response or reticulophagy (also called ER-phagy). As part of the UREL complex, plays a key role in ribosome recycling by catalyzing mono-ufmylation of RPL26/uL24 subunit of the 60S ribosome. Ufmylation of RPL26/uL24 occurs on free 60S ribosomes following ribosome dissociation: it weakens the junction between post-termination 60S subunits and SEC61 translocons, promoting release and recycling of the large ribosomal subunit from the endoplasmic reticulum membrane. Ufmylation of RPL26/uL24 and subsequent 60S ribosome recycling either take place after normal termination of translation or after ribosome stalling during cotranslational translocation at the endoplasmic reticulum. Involved in reticulophagy in response to endoplasmic reticulum stress by mediating ufmylation of proteins such as CYB5R3 and RPN1, thereby promoting lysosomal degradation of ufmylated proteins. Ufmylation in response to endoplasmic reticulum stress is essential for processes such as hematopoiesis, blood vessel morphogenesis or inflammatory response. The protein is E3 UFM1-protein ligase 1 of Danio rerio (Zebrafish).